Here is a 360-residue protein sequence, read N- to C-terminus: Mediator of RNA polymerase II transcription subunit 6 (360 aa).

Disordered regions lie at residues 186–238 (PAQP…NDPL) and 316–360 (AAAA…PGAA). 2 stretches are compositionally biased toward low complexity: residues 190 to 205 (SAGA…YTAS) and 316 to 325 (AAAAAANANA).

It belongs to the Mediator complex subunit 6 family. Component of the Mediator complex.

Its subcellular location is the nucleus. In terms of biological role, component of the Mediator complex, a coactivator involved in the regulated transcription of nearly all RNA polymerase II-dependent genes. Mediator functions as a bridge to convey information from gene-specific regulatory proteins to the basal RNA polymerase II transcription machinery. Mediator is recruited to promoters by direct interactions with regulatory proteins and serves as a scaffold for the assembly of a functional preinitiation complex with RNA polymerase II and the general transcription factors. This chain is Mediator of RNA polymerase II transcription subunit 6 (med-6), found in Neurospora crassa (strain ATCC 24698 / 74-OR23-1A / CBS 708.71 / DSM 1257 / FGSC 987).